We begin with the raw amino-acid sequence, 150 residues long: SKP1-like protein 17 (150 aa).

The interval 92–150 is interaction with the F-box domain of F-box proteins; the sequence is LDAADYLIVIGLKNLIAQAIADYTADKTVNEIRELFNIENDYTPEEEEELRKKNEWAFN.

It belongs to the SKP1 family. As to quaternary structure, part of a SCF (SKP1-cullin-F-box) protein ligase complex. Interacts with CPR1/CPR30. As to expression, mainly detected in the siliques.

The protein resides in the nucleus. The protein operates within protein modification; protein ubiquitination. Involved in ubiquitination and subsequent proteasomal degradation of target proteins. Together with CUL1, RBX1 and a F-box protein, it forms a SCF E3 ubiquitin ligase complex. The functional specificity of this complex depends on the type of F-box protein. In the SCF complex, it serves as an adapter that links the F-box protein to CUL1. Probably implicated in incompatibility response after hybridization. This chain is SKP1-like protein 17 (ASK17), found in Arabidopsis thaliana (Mouse-ear cress).